The following is a 419-amino-acid chain: Histidine--tRNA ligase (419 aa).

It belongs to the class-II aminoacyl-tRNA synthetase family. Homodimer.

It is found in the cytoplasm. It carries out the reaction tRNA(His) + L-histidine + ATP = L-histidyl-tRNA(His) + AMP + diphosphate + H(+). The sequence is that of Histidine--tRNA ligase from Caldicellulosiruptor saccharolyticus (strain ATCC 43494 / DSM 8903 / Tp8T 6331).